The sequence spans 859 residues: Collagen alpha-1(II) chain (859 aa).

A disordered region spans residues Leu1 to Pro607. Residues Pro31 and Pro40 each carry the 4-hydroxyproline modification. Pro42 carries the 3-hydroxyproline modification. 2 positions are modified to 4-hydroxyproline: Pro43 and Pro46. Residues Glu78–Gln121 show a composition bias toward low complexity. Residues Lys136–Pro147 show a composition bias toward basic and acidic residues. Composition is skewed to low complexity over residues Pro204 to Lys220 and Pro249 to Val277. Pro279 bears the 3-hydroxyproline mark. A compositionally biased stretch (pro residues) spans Pro279–Pro292. 4-hydroxyproline occurs at positions 280, 286, and 292. Residues Asp306–Pro321 show a composition bias toward low complexity. Positions Arg487 to Leu501 are enriched in basic and acidic residues. Residues Gly491–Pro586 form a triple-helical region region. At Pro516 the chain carries 3-hydroxyproline. Over residues Ser520 to Ala529 the composition is skewed to low complexity. The residue at position 553 (Pro553) is a 4-hydroxyproline. 3-hydroxyproline is present on Pro558. 4-hydroxyproline is present on Pro559. A compositionally biased stretch (pro residues) spans Pro570–Pro586. Residue Pro573 is modified to 3-hydroxyproline. Pro574 and Pro577 each carry 4-hydroxyproline. Pro579 is modified (3-hydroxyproline). Pro580 and Pro583 each carry 4-hydroxyproline. 3-hydroxyproline is present on Pro585. Position 586 is a 4-hydroxyproline (Pro586). A nonhelical region (C-terminal) region spans residues Gly587 to Ala613. Residues Asp614–Leu859 constitute a propeptide, C-terminal propeptide. The 235-residue stretch at Val625–Leu859 folds into the Fibrillar collagen NC1 domain. 3 disulfide bridges follow: Cys655–Cys687, Cys695–Cys857, and Cys765–Cys810. Positions 673, 675, 676, 678, and 681 each coordinate Ca(2+). N-linked (GlcNAc...) asparagine glycosylation is present at Asn760.

Belongs to the fibrillar collagen family. Homotrimers of alpha 1(II) chains. Post-translationally, contains mostly 4-hydroxyproline. Prolines at the third position of the tripeptide repeating unit (G-X-P) are 4-hydroxylated in some or all of the chains. In terms of processing, contains 3-hydroxyproline at a few sites. This modification occurs on the first proline residue in the sequence motif Gly-Pro-Hyp, where Hyp is 4-hydroxyproline. Lysine residues at the third position of the tripeptide repeating unit (G-X-Y) are 5-hydroxylated in some or all of the chains. Post-translationally, O-glycosylated on hydroxylated lysine residues. The O-linked glycan consists of a Glc-Gal disaccharide.

The protein localises to the secreted. The protein resides in the extracellular space. It is found in the extracellular matrix. Type II collagen is specific for cartilaginous tissues. It is essential for the normal embryonic development of the skeleton, for linear growth and for the ability of cartilage to resist compressive forces. This chain is Collagen alpha-1(II) chain, found in Gallus gallus (Chicken).